The following is a 238-amino-acid chain: NAD(P)H-hydrate epimerase (238 aa).

A YjeF N-terminal domain is found at 11 to 217 (AAALDKDLMS…EIHQKYNLQL (207 aa)). 61-65 (NNGGD) lines the (6S)-NADPHX pocket. N62 and D123 together coordinate K(+). (6S)-NADPHX contacts are provided by residues 127 to 133 (GFSFTGS) and D156. Position 159 (S159) interacts with K(+).

Belongs to the NnrE/AIBP family. K(+) is required as a cofactor.

It localises to the cytoplasm. It is found in the mitochondrion. It catalyses the reaction (6R)-NADHX = (6S)-NADHX. The catalysed reaction is (6R)-NADPHX = (6S)-NADPHX. Catalyzes the epimerization of the S- and R-forms of NAD(P)HX, a damaged form of NAD(P)H that is a result of enzymatic or heat-dependent hydration. This is a prerequisite for the S-specific NAD(P)H-hydrate dehydratase to allow the repair of both epimers of NAD(P)HX. This chain is NAD(P)H-hydrate epimerase, found in Sclerotinia sclerotiorum (strain ATCC 18683 / 1980 / Ss-1) (White mold).